Reading from the N-terminus, the 90-residue chain is FMRFamide-like neuropeptides 27 (90 aa).

Positions 1–24 (MFSFRKFLAFMLIVIALMASFSSA) are cleaved as a signal peptide. The propeptide occupies 25-36 (QPIDEERPIFME). At phenylalanine 61 the chain carries Phenylalanine amide. A propeptide spanning residues 65–90 (SSSPSDISMAELRAIYGGGPVEYVQL) is cleaved from the precursor.

The protein belongs to the FARP (FMRFamide related peptide) family.

It is found in the secreted. In terms of biological role, FMRFamides and FMRFamide-like peptides are neuropeptides. The chain is FMRFamide-like neuropeptides 27 from Caenorhabditis briggsae.